Consider the following 609-residue polypeptide: Probable translation initiation factor IF-2 (609 aa).

Residues 12–230 (LRQPIVAVLG…VLAGLAQRYM (219 aa)) enclose the tr-type G domain. The interval 21 to 28 (GHVDHGKT) is G1. 21–28 (GHVDHGKT) contributes to the GTP binding site. Positions 46-50 (QITQH) are G2. The G3 stretch occupies residues 86–89 (DTPG). GTP is bound by residues 86–90 (DTPGH) and 140–143 (NKID). The interval 140–143 (NKID) is G4. Residues 208-210 (SAK) are G5.

The protein belongs to the TRAFAC class translation factor GTPase superfamily. Classic translation factor GTPase family. IF-2 subfamily.

Function in general translation initiation by promoting the binding of the formylmethionine-tRNA to ribosomes. Seems to function along with eIF-2. This chain is Probable translation initiation factor IF-2, found in Ignicoccus hospitalis (strain KIN4/I / DSM 18386 / JCM 14125).